The following is a 534-amino-acid chain: CTP synthase (534 aa).

Residues 1–267 (MTKYIFVTGG…DQIVCDHLKL (267 aa)) are amidoligase domain. Position 13 (S13) interacts with CTP. UTP is bound at residue S13. 14 to 19 (SIGKGI) is an ATP binding site. Y54 provides a ligand contact to L-glutamine. D71 is a binding site for ATP. The Mg(2+) site is built by D71 and E141. CTP contacts are provided by residues 148-150 (DIE), 188-193 (KTKPTQ), and K224. UTP is bound by residues 188-193 (KTKPTQ) and K224. The 243-residue stretch at 292–534 (KIALVGKYVE…FVTAAVENAK (243 aa)) folds into the Glutamine amidotransferase type-1 domain. Residue G354 coordinates L-glutamine. The active-site Nucleophile; for glutamine hydrolysis is C381. L-glutamine-binding positions include 382–385 (LGMQ), E405, and R463. Catalysis depends on residues H508 and E510.

It belongs to the CTP synthase family. As to quaternary structure, homotetramer.

It catalyses the reaction UTP + L-glutamine + ATP + H2O = CTP + L-glutamate + ADP + phosphate + 2 H(+). The enzyme catalyses L-glutamine + H2O = L-glutamate + NH4(+). It carries out the reaction UTP + NH4(+) + ATP = CTP + ADP + phosphate + 2 H(+). The protein operates within pyrimidine metabolism; CTP biosynthesis via de novo pathway; CTP from UDP: step 2/2. With respect to regulation, allosterically activated by GTP, when glutamine is the substrate; GTP has no effect on the reaction when ammonia is the substrate. The allosteric effector GTP functions by stabilizing the protein conformation that binds the tetrahedral intermediate(s) formed during glutamine hydrolysis. Inhibited by the product CTP, via allosteric rather than competitive inhibition. Its function is as follows. Catalyzes the ATP-dependent amination of UTP to CTP with either L-glutamine or ammonia as the source of nitrogen. Regulates intracellular CTP levels through interactions with the four ribonucleotide triphosphates. The sequence is that of CTP synthase from Streptococcus thermophilus (strain ATCC BAA-250 / LMG 18311).